The primary structure comprises 343 residues: Dehydrodolichyl diphosphate synthase complex subunit SRT1 (343 aa).

Belongs to the UPP synthase family. Forms an active dehydrodolichyl diphosphate synthase complex with NUS1. The cofactor is Mg(2+).

The protein resides in the lipid droplet. The enzyme catalyses n isopentenyl diphosphate + (2E,6E)-farnesyl diphosphate = a di-trans,poly-cis-polyprenyl diphosphate + n diphosphate. The protein operates within protein modification; protein glycosylation. In terms of biological role, with NUS1, forms the dehydrodolichyl diphosphate synthase (DDS) complex, an essential component of the dolichol monophosphate (Dol-P) biosynthetic machinery. Adds multiple copies of isopentenyl pyrophosphate (IPP) to farnesyl pyrophosphate (FPP) to produce dehydrodolichyl diphosphate (Dedol-PP), a precursor of dolichol which is utilized as a sugar carrier in protein glycosylation in the endoplasmic reticulum (ER). The chain is Dehydrodolichyl diphosphate synthase complex subunit SRT1 from Saccharomyces cerevisiae (strain ATCC 204508 / S288c) (Baker's yeast).